A 232-amino-acid chain; its full sequence is Ubiquitin carboxyl-terminal hydrolase UCHL3 (232 aa).

A UCH catalytic domain is found at 6–225 (IWTPLESNPD…LRFSALAVIP (220 aa)). Residues 10–14 (LESNP) form an interaction with ubiquitin region. Residue Cys-92 is the Nucleophile of the active site. The segment at 151–159 (QVENRDDIL) is crossover loop which restricts access of large ubiquitin adducts to the active site. Positions 163-165 (THF) are interaction with ubiquitin. His-164 acts as the Proton donor in catalysis.

It belongs to the peptidase C12 family.

It carries out the reaction Thiol-dependent hydrolysis of ester, thioester, amide, peptide and isopeptide bonds formed by the C-terminal Gly of ubiquitin (a 76-residue protein attached to proteins as an intracellular targeting signal).. Thiol protease that recognizes and hydrolyzes a peptide bond at the C-terminal glycine of either ubiquitin or NEDD8. Essential for parasite blood stage survival. The sequence is that of Ubiquitin carboxyl-terminal hydrolase UCHL3 from Plasmodium falciparum (isolate 3D7).